A 480-amino-acid chain; its full sequence is MKLEPLFNLDPNTKVRTRFAPSPTGYLHVGGARTALYSWLYAKHNQGEFVLRIEDTDLERSTPEATAAILEGMEWLNLAWEHGPYFQTKRFERYNQVIDQMIEQGLAYRCYCTKERLEDLRHSQEQNKQKPRYDRYCLHQSEYPVDAPHVVRFKNPTEGTVVFDDAVRGRIEISNRELDDLIIRRTDGSPTYNFCVVVDDWDMGITHVVRGEDHINNTPRQINILKALGAPIPTYAHVSMINGDDGQKLSKRHGAVSVMQYRDEGYLPEALINYLVRLGWGHGDQEIFSREEMIALFDIHSVSKSASAFNTEKLQWLNQHYIRSLPVEQVATHLEWHMKKHGIDYSNGPNLAEIIPVLSERCKTLKELAISSRYFYQDVENYDEKAVAKNFKPEAIKPLAKLAEKLTALSDWTVENIHEVMSQTAQELDIGMGKVGMPFRLAVTGLGQSPSMDITAKLVGKDRTISRINNAIAFIHTQNV.

Positions 21-31 (PSPTGYLHVGG) match the 'HIGH' region motif. Residues Cys110, Cys112, Cys137, and His139 each contribute to the Zn(2+) site. Positions 248-252 (KLSKR) match the 'KMSKS' region motif. Residue Lys251 participates in ATP binding.

It belongs to the class-I aminoacyl-tRNA synthetase family. Glutamate--tRNA ligase type 1 subfamily. In terms of assembly, monomer. Zn(2+) serves as cofactor.

The protein localises to the cytoplasm. The catalysed reaction is tRNA(Glu) + L-glutamate + ATP = L-glutamyl-tRNA(Glu) + AMP + diphosphate. Functionally, catalyzes the attachment of glutamate to tRNA(Glu) in a two-step reaction: glutamate is first activated by ATP to form Glu-AMP and then transferred to the acceptor end of tRNA(Glu). This chain is Glutamate--tRNA ligase, found in Histophilus somni (strain 2336) (Haemophilus somnus).